A 98-amino-acid polypeptide reads, in one-letter code: Large ribosomal subunit protein uL23 (98 aa).

The protein belongs to the universal ribosomal protein uL23 family. As to quaternary structure, part of the 50S ribosomal subunit. Contacts protein L29, and trigger factor when it is bound to the ribosome.

In terms of biological role, one of the early assembly proteins it binds 23S rRNA. One of the proteins that surrounds the polypeptide exit tunnel on the outside of the ribosome. Forms the main docking site for trigger factor binding to the ribosome. This is Large ribosomal subunit protein uL23 from Herpetosiphon aurantiacus (strain ATCC 23779 / DSM 785 / 114-95).